We begin with the raw amino-acid sequence, 775 residues long: Putative late blight resistance protein homolog R1A-3 (775 aa).

Residues 16-39 (PRMNEEIVGFEDVIENLRKKLLSE) are a coiled coil. Residues 17 to 237 (RMNEEIVGFE…LSEMEKEVEC (221 aa)) form the NB-ARC domain. Residue 50-57 (GMPGLGKT) participates in ATP binding. One can recognise an HMA domain in the interval 711–775 (IKKMILQFDI…VGKLIDSGML (65 aa)).

It belongs to the disease resistance NB-LRR family.

It is found in the cytoplasm. It localises to the membrane. In terms of biological role, confers resistance to late blight (Phytophthora infestans) races carrying the avirulence gene Avr1. Resistance proteins guard the plant against pathogens that contain an appropriate avirulence protein via an indirect interaction with this avirulence protein. That triggers a defense system including the hypersensitive response, which restricts the pathogen growth. The polypeptide is Putative late blight resistance protein homolog R1A-3 (R1A-3) (Solanum demissum (Wild potato)).